We begin with the raw amino-acid sequence, 376 residues long: MTATAQRQLPLDTPSASTLAQQAELHPELNRAHVRFINLGKTYHGKQGPVEALGNIDLAVQRGEIFGIIGRSGAGKSSLIRTINRLEQPSSGRVLIDQVDIGEFDEDKLVELRRRIGMIFQHFNLMSAKTVWQNVELPLKVAGVPREQRARKVAQLLELVGLQDKHNAYPAQLSGGQKQRVGIARALVHDPAILLCDEATSALDPETTQSILGLLREINQRLGLTIVLITHEMAVIRDICHRVVVLEQGRIVEQGPVWQVFGDPQHDVSKTLLAPLQTGLPKEWAERLSDQPQRPDAALLLDVHFTGASDQGPDLAALFAALGGKVQLLQGGVERIQERAIGHLILSVAGSVHTRDELLARARQLAPRAEVLGYVG.

One can recognise an ABC transporter domain in the interval V34 to L273. G70–S77 contributes to the ATP binding site.

Belongs to the ABC transporter superfamily. Methionine importer (TC 3.A.1.24) family. As to quaternary structure, the complex is composed of two ATP-binding proteins (MetN), two transmembrane proteins (MetI) and a solute-binding protein (MetQ).

The protein localises to the cell inner membrane. The catalysed reaction is L-methionine(out) + ATP + H2O = L-methionine(in) + ADP + phosphate + H(+). It carries out the reaction D-methionine(out) + ATP + H2O = D-methionine(in) + ADP + phosphate + H(+). In terms of biological role, part of the ABC transporter complex MetNIQ involved in methionine import. Responsible for energy coupling to the transport system. In Pseudomonas savastanoi pv. phaseolicola (strain 1448A / Race 6) (Pseudomonas syringae pv. phaseolicola (strain 1448A / Race 6)), this protein is Methionine import ATP-binding protein MetN 2.